We begin with the raw amino-acid sequence, 577 residues long: Pyruvate decarboxylase (577 aa).

The substrate site is built by aspartate 30 and histidine 116. The tract at residues 388-482 is thiamine pyrophosphate binding; it reads TPGYGVNDFI…FLINNDGYTI (95 aa). Positions 450, 477, and 479 each coordinate Mg(2+). Position 483 (glutamate 483) interacts with substrate.

This sequence belongs to the TPP enzyme family. As to quaternary structure, homotetramer. It depends on a metal cation as a cofactor. Thiamine diphosphate is required as a cofactor.

The enzyme catalyses a 2-oxocarboxylate + H(+) = an aldehyde + CO2. This Aspergillus parasiticus protein is Pyruvate decarboxylase (pdcA).